A 245-amino-acid polypeptide reads, in one-letter code: Membrane-spanning 4-domains subfamily A member 15 (245 aa).

A disordered region spans residues 1 to 30; sequence MWERRGRGESAAGTAAVASRNASGLRPPPA. A run of 4 helical transmembrane segments spans residues 78–98, 103–123, 147–167, and 176–196; these read GTVQ…LLMV, LGML…FIIS, ILSA…FGVT, and LAVL…ATHF.

The protein belongs to the MS4A family.

It is found in the membrane. Functionally, may be involved in signal transduction as a component of a multimeric receptor complex. The polypeptide is Membrane-spanning 4-domains subfamily A member 15 (Ms4a15) (Mus musculus (Mouse)).